Reading from the N-terminus, the 515-residue chain is Maturase K (515 aa).

Belongs to the intron maturase 2 family. MatK subfamily.

Its subcellular location is the plastid. It is found in the chloroplast. Its function is as follows. Usually encoded in the trnK tRNA gene intron. Probably assists in splicing its own and other chloroplast group II introns. In Pinus pumila (Dwarf Siberian pine), this protein is Maturase K.